The following is a 396-amino-acid chain: Elongation factor Tu (396 aa).

Residues 10-206 (KPHVNIGTIG…AVDSYIPDPE (197 aa)) form the tr-type G domain. Residues 19 to 26 (GHVDHGKT) form a G1 region. Position 19 to 26 (19 to 26 (GHVDHGKT)) interacts with GTP. Position 26 (Thr-26) interacts with Mg(2+). A G2 region spans residues 60–64 (GITIA). The interval 81–84 (DCPG) is G3. GTP-binding positions include 81–85 (DCPGH) and 136–139 (NKAD). The G4 stretch occupies residues 136-139 (NKAD). The G5 stretch occupies residues 174 to 176 (SAL).

This sequence belongs to the TRAFAC class translation factor GTPase superfamily. Classic translation factor GTPase family. EF-Tu/EF-1A subfamily. As to quaternary structure, monomer.

It localises to the cytoplasm. The enzyme catalyses GTP + H2O = GDP + phosphate + H(+). Functionally, GTP hydrolase that promotes the GTP-dependent binding of aminoacyl-tRNA to the A-site of ribosomes during protein biosynthesis. This Pelobacter propionicus (strain DSM 2379 / NBRC 103807 / OttBd1) protein is Elongation factor Tu.